Here is a 390-residue protein sequence, read N- to C-terminus: MPPSGLRLLPLLLPLLRLLVLTPGRPAAGLSTCKTIDMELVKRKRIEAIRGQILSKLRLSSPPSQGEVPPVPLPEAVLALYNSTRDRVAGESAEPEPEPEADYYAKEVTRVLMVENTNKIYEKVKKSPHSIYMLFNTSELREAVPEPVLLSRAELRLLRLKLKAEQHVELYQKYSNDSWRYLSNRLLAPSDTPEWLSFDVTGVVRQWLSHGGEVEGFRLSAHCSCDSKDNTLQVDINGFSSSRRGDLATIHGMNRPFLLLMATPLERAQHLHSSRQRRALDTNYCFSSTEKNCCVRQLYIDFRKDLGWKWIHEPKGYHANFCLGPCPYIWSLDTQYSKVLALYNQHNPGASAAPCCVPQALEPLPIVYYVGRKPKVEQLSNMIVRSCKCS.

A signal peptide spans 1–29 (MPPSGLRLLPLLLPLLRLLVLTPGRPAAG). Positions 30 to 74 (LSTCKTIDMELVKRKRIEAIRGQILSKLRLSSPPSQGEVPPVPLP) are straightjacket domain. Positions 75 to 271 (EAVLALYNST…ATPLERAQHL (197 aa)) are arm domain. N-linked (GlcNAc...) asparagine glycans are attached at residues N82, N136, and N176. Positions 226–252 (DSKDNTLQVDINGFSSSRRGDLATIHG) are bowtie tail. A Cell attachment site motif is present at residues 244-246 (RGD). 4 cysteine pairs are disulfide-bonded: C285/C294, C293/C356, C322/C387, and C326/C389.

It belongs to the TGF-beta family. Homodimer; disulfide-linked. Interacts with the serine proteases, HTRA1 and HTRA3: the interaction with either inhibits TGFB1-mediated signaling and the HTRA protease activity is required for this inhibition. May interact with THSD4; this interaction may lead to sequestration by FBN1 microfibril assembly and attenuation of TGFB signaling. Interacts with CD109, DPT and ASPN. Interacts with EFEMP2. Interacts with TSKU; the interaction contributes to regulation of the hair cycle. Interacts with TGFBR3. In terms of assembly, homodimer; disulfide-linked. Interacts with transforming growth factor beta-1 (TGF-beta-1) chain; interaction is non-covalent and maintains TGF-beta-1 in a latent state; each latency-associated peptide (LAP) monomer interacts with TGF-beta-1 in the other monomer. Interacts with LTBP1; leading to regulation of TGF-beta-1 activation. Interacts with LRRC32/GARP; leading to regulation of TGF-beta-1 activation on the surface of activated regulatory T-cells (Tregs). Interacts with LRRC33/NRROS; leading to regulation of TGF-beta-1 activation in macrophages and microglia. Interacts (via cell attachment site) with integrins ITGAV and ITGB6 (ITGAV:ITGB6), leading to release of the active TGF-beta-1. Interacts with NREP; the interaction results in a decrease in TGFB1 autoinduction. Interacts with HSP90AB1; inhibits latent TGFB1 activation. As to quaternary structure, homodimer; disulfide-linked. Interacts with TGF-beta receptors (TGFBR1 and TGFBR2), leading to signal transduction. Transforming growth factor beta-1 proprotein: The precursor proprotein is cleaved in the Golgi apparatus by FURIN to form Transforming growth factor beta-1 (TGF-beta-1) and Latency-associated peptide (LAP) chains, which remain non-covalently linked, rendering TGF-beta-1 inactive. In terms of processing, N-glycosylated. Deglycosylation leads to activation of Transforming growth factor beta-1 (TGF-beta-1); mechanisms triggering deglycosylation-driven activation of TGF-beta-1 are however unclear.

The protein resides in the secreted. Its subcellular location is the extracellular space. It is found in the extracellular matrix. Transforming growth factor beta-1 proprotein: Precursor of the Latency-associated peptide (LAP) and Transforming growth factor beta-1 (TGF-beta-1) chains, which constitute the regulatory and active subunit of TGF-beta-1, respectively. Its function is as follows. Required to maintain the Transforming growth factor beta-1 (TGF-beta-1) chain in a latent state during storage in extracellular matrix. Associates non-covalently with TGF-beta-1 and regulates its activation via interaction with 'milieu molecules', such as LTBP1, LRRC32/GARP and LRRC33/NRROS, that control activation of TGF-beta-1. Interaction with LRRC33/NRROS regulates activation of TGF-beta-1 in macrophages and microglia. Interaction with LRRC32/GARP controls activation of TGF-beta-1 on the surface of activated regulatory T-cells (Tregs). Interaction with integrins (ITGAV:ITGB6 or ITGAV:ITGB8) results in distortion of the Latency-associated peptide chain and subsequent release of the active TGF-beta-1. In terms of biological role, multifunctional protein that regulates the growth and differentiation of various cell types and is involved in various processes, such as normal development, immune function, microglia function and responses to neurodegeneration. Activation into mature form follows different steps: following cleavage of the proprotein in the Golgi apparatus, Latency-associated peptide (LAP) and Transforming growth factor beta-1 (TGF-beta-1) chains remain non-covalently linked rendering TGF-beta-1 inactive during storage in extracellular matrix. At the same time, LAP chain interacts with 'milieu molecules', such as LTBP1, LRRC32/GARP and LRRC33/NRROS that control activation of TGF-beta-1 and maintain it in a latent state during storage in extracellular milieus. TGF-beta-1 is released from LAP by integrins (ITGAV:ITGB6 or ITGAV:ITGB8): integrin-binding to LAP stabilizes an alternative conformation of the LAP bowtie tail and results in distortion of the LAP chain and subsequent release of the active TGF-beta-1. Once activated following release of LAP, TGF-beta-1 acts by binding to TGF-beta receptors (TGFBR1 and TGFBR2), which transduce signal. While expressed by many cells types, TGF-beta-1 only has a very localized range of action within cell environment thanks to fine regulation of its activation by Latency-associated peptide chain (LAP) and 'milieu molecules'. Plays an important role in bone remodeling: acts as a potent stimulator of osteoblastic bone formation, causing chemotaxis, proliferation and differentiation in committed osteoblasts. Can promote either T-helper 17 cells (Th17) or regulatory T-cells (Treg) lineage differentiation in a concentration-dependent manner. At high concentrations, leads to FOXP3-mediated suppression of RORC and down-regulation of IL-17 expression, favoring Treg cell development. At low concentrations in concert with IL-6 and IL-21, leads to expression of the IL-17 and IL-23 receptors, favoring differentiation to Th17 cells. Stimulates sustained production of collagen through the activation of CREB3L1 by regulated intramembrane proteolysis (RIP). Mediates SMAD2/3 activation by inducing its phosphorylation and subsequent translocation to the nucleus. Positively regulates odontoblastic differentiation in dental papilla cells, via promotion of IPO7-mediated translocation of phosphorylated SMAD2 to the nucleus and subsequent transcription of target genes. Can induce epithelial-to-mesenchymal transition (EMT) and cell migration in various cell types. In Canis lupus familiaris (Dog), this protein is Transforming growth factor beta-1 proprotein (TGFB1).